The chain runs to 99 residues: Acylphosphatase (99 aa).

In terms of domain architecture, Acylphosphatase-like spans 5–97 (VRQVTVQGRV…RPGERFSTLP (93 aa)). Residues Arg20 and Asn38 contribute to the active site.

Belongs to the acylphosphatase family.

The catalysed reaction is an acyl phosphate + H2O = a carboxylate + phosphate + H(+). The chain is Acylphosphatase (acyP) from Rhodopseudomonas palustris (strain BisB18).